We begin with the raw amino-acid sequence, 74 residues long: Translation initiation factor IF-1 (74 aa).

Residues 1 to 73 (MAKKDDIIEF…TKGRITYRGK (73 aa)) enclose the S1-like domain.

It belongs to the IF-1 family. Component of the 30S ribosomal translation pre-initiation complex which assembles on the 30S ribosome in the order IF-2 and IF-3, IF-1 and N-formylmethionyl-tRNA(fMet); mRNA recruitment can occur at any time during PIC assembly.

It is found in the cytoplasm. One of the essential components for the initiation of protein synthesis. Stabilizes the binding of IF-2 and IF-3 on the 30S subunit to which N-formylmethionyl-tRNA(fMet) subsequently binds. Helps modulate mRNA selection, yielding the 30S pre-initiation complex (PIC). Upon addition of the 50S ribosomal subunit IF-1, IF-2 and IF-3 are released leaving the mature 70S translation initiation complex. This is Translation initiation factor IF-1 from Psychrobacter sp. (strain PRwf-1).